A 173-amino-acid chain; its full sequence is NADH-quinone oxidoreductase subunit B 1 (173 aa).

Cysteine 42, cysteine 43, cysteine 107, and cysteine 137 together coordinate [4Fe-4S] cluster.

It belongs to the complex I 20 kDa subunit family. As to quaternary structure, NDH-1 is composed of 14 different subunits. Subunits NuoB, C, D, E, F, and G constitute the peripheral sector of the complex. Requires [4Fe-4S] cluster as cofactor.

The protein localises to the cell inner membrane. It carries out the reaction a quinone + NADH + 5 H(+)(in) = a quinol + NAD(+) + 4 H(+)(out). In terms of biological role, NDH-1 shuttles electrons from NADH, via FMN and iron-sulfur (Fe-S) centers, to quinones in the respiratory chain. The immediate electron acceptor for the enzyme in this species is believed to be ubiquinone. Couples the redox reaction to proton translocation (for every two electrons transferred, four hydrogen ions are translocated across the cytoplasmic membrane), and thus conserves the redox energy in a proton gradient. This chain is NADH-quinone oxidoreductase subunit B 1, found in Anaeromyxobacter sp. (strain K).